The following is a 127-amino-acid chain: Probable soluble cytochrome b562 1 (127 aa).

Positions 1 to 21 are cleaved as a signal peptide; it reads MRKIPIIAGVFSLLITSCTFA. 2 residues coordinate heme b: M28 and H123.

It belongs to the cytochrome b562 family. Heme b serves as cofactor.

The protein resides in the periplasm. In terms of biological role, electron-transport protein of unknown function. The polypeptide is Probable soluble cytochrome b562 1 (cybC1) (Yersinia pestis).